Reading from the N-terminus, the 614-residue chain is Leucine aminopeptidase 2 (614 aa).

A peptide is bound by residues 139–141 and 271–276; these read QCQ and PYGGME. Histidine 300 is a Zn(2+) binding site. Glutamate 301 serves as the catalytic Proton acceptor. Positions 304 and 323 each coordinate Zn(2+). Tyrosine 385 acts as the Proton donor in catalysis.

It belongs to the peptidase M1 family. It depends on Zn(2+) as a cofactor.

It localises to the cytoplasm. Its subcellular location is the nucleus. It carries out the reaction an epoxide + H2O = an ethanediol. Aminopeptidase that preferentially cleaves di- and tripeptides. Also has low epoxide hydrolase activity (in vitro). Can hydrolyze the epoxide leukotriene LTA(4) but it forms preferentially 5,6-dihydroxy-7,9,11,14-eicosatetraenoic acid rather than the cytokine leukotriene B(4) as the product compared to the homologous mammalian enzyme (in vitro). The polypeptide is Leucine aminopeptidase 2 (Aspergillus fumigatus (strain ATCC MYA-4609 / CBS 101355 / FGSC A1100 / Af293) (Neosartorya fumigata)).